Here is a 254-residue protein sequence, read N- to C-terminus: MTLAKRIIPCLDVTAGRVVKGVNFLELRDAGDPVEIARRYDDQGADELTFLDITATSDGRDLILDIIEAVASQVFIPLTVGGGVRAVDDVRRLLNAGADKVGINSSAISNPQLVFDASQKYGSQCIVVAIDAKKAADGRWEVFTHGGRKATGLDAIEWAKKMESLGAGEILLTSMDRDGTKVGFDLDLTRSVSDAISIPVIASGGVGGLQDLVDGVKIGRADAVLAASIFHYGQHTVQEAKRFMSEQGIAMRLT.

Active-site residues include Asp-12 and Asp-131.

The protein belongs to the HisA/HisF family. As to quaternary structure, heterodimer of HisH and HisF.

It is found in the cytoplasm. The enzyme catalyses 5-[(5-phospho-1-deoxy-D-ribulos-1-ylimino)methylamino]-1-(5-phospho-beta-D-ribosyl)imidazole-4-carboxamide + L-glutamine = D-erythro-1-(imidazol-4-yl)glycerol 3-phosphate + 5-amino-1-(5-phospho-beta-D-ribosyl)imidazole-4-carboxamide + L-glutamate + H(+). It functions in the pathway amino-acid biosynthesis; L-histidine biosynthesis; L-histidine from 5-phospho-alpha-D-ribose 1-diphosphate: step 5/9. In terms of biological role, IGPS catalyzes the conversion of PRFAR and glutamine to IGP, AICAR and glutamate. The HisF subunit catalyzes the cyclization activity that produces IGP and AICAR from PRFAR using the ammonia provided by the HisH subunit. In Herminiimonas arsenicoxydans, this protein is Imidazole glycerol phosphate synthase subunit HisF.